The following is a 371-amino-acid chain: Glyco-Gag protein (371 aa).

Over 1–51 (MSGASSGTAIGAHLFGVSPEYRVLIGDEGAGPSKSLSEVSFSVWYRSRAAR) the chain is Cytoplasmic. Residues 52–72 (LVILCLVASFLVPCLTFLIAE) traverse the membrane as a helical segment. Over 73-371 (AVMGQTVTTP…NVIDETFPLT (299 aa)) the chain is Extracellular. N134 carries N-linked (GlcNAc...) asparagine; by host glycosylation. Disordered regions lie at residues 171–281 (VRPF…NNRP) and 350–371 (VPGEDGRPTQLPNVIDETFPLT). Residues 174 to 193 (FLPPPKPPTPLPQPLSPQPS) show a composition bias toward pro residues. Residues 194-203 (APLTSSLYPV) show a composition bias toward low complexity. Pro residues-rich tracts occupy residues 204–220 (VPKPDPPKPPVLPPDPS) and 230–245 (EPPPYPGGHGPPPSGP).

In terms of processing, glycosylated by host. Post-translationally, cleaved by host near the middle of the molecule, releasing the c-terminal half containing capsid and nucleoprotein domains op GAG.

It is found in the host cell membrane. Functionally, plays a role in viral particle release. Presumably acts by facilitating the fission of the virion bud at the cell surface. The protein is Glyco-Gag protein of Feline sarcoma virus (strain Snyder-Theilen).